The primary structure comprises 141 residues: Putative pre-16S rRNA nuclease (141 aa).

The protein belongs to the YqgF nuclease family.

It is found in the cytoplasm. Could be a nuclease involved in processing of the 5'-end of pre-16S rRNA. The chain is Putative pre-16S rRNA nuclease from Shewanella denitrificans (strain OS217 / ATCC BAA-1090 / DSM 15013).